The chain runs to 110 residues: Period circadian protein (110 aa).

The interval 23–97 (VTNTSIAGTG…GGAGGGGGVT (75 aa)) is disordered. 12 tandem repeats follow at residues 30 to 31 (GT), 33 to 34 (GT), 36 to 37 (GT), 38 to 39 (GT), 40 to 41 (GT), 42 to 43 (GT), 44 to 45 (GT), 46 to 47 (GT), 48 to 49 (GT), 50 to 51 (GT), 52 to 53 (GT), and 54 to 55 (GT). The span at 30–63 (GTGGTGGTGTGTGTGTGTGTGTGTGTDTGTGTGT) shows a compositional bias: gly residues. Residues 30 to 79 (GTGGTGGTGTGTGTGTGTGTGTGTGTDTGTGTGTRNGTNSGTNSGTRTGT) are 24 X 2 AA approximate tandem repeats of G-T. The stretch at 56-57 (DT) is one 13; approximate repeat. 3 repeat units span residues 58-59 (GT), 60-61 (GT), and 62-63 (GT). One copy of the 17; approximate repeat lies at 64–65 (RN). The segment covering 64 to 83 (RNGTNSGTNSGTRTGTASSY) has biased composition (low complexity). Repeat 18 spans residues 66-67 (GT). One copy of the 19; approximate repeat lies at 68–69 (NS). Copy 20 of the repeat occupies 70 to 71 (GT). One copy of the 21; approximate repeat lies at 72–73 (NS). Residues 74–75 (GT) form repeat 22. One copy of the 23; approximate repeat lies at 76 to 77 (RT). Repeat 24 spans residues 78–79 (GT). The segment covering 84-96 (RGGGGGAGGGGGV) has biased composition (gly residues).

Forms a heterodimer with timeless (TIM); the complex then translocates into the nucleus. Post-translationally, phosphorylated with a circadian rhythmicity, probably by the double-time protein (dbt). Phosphorylation could be implicated in the stability of per monomer and in the formation of heterodimer per-tim.

It localises to the nucleus. Its subcellular location is the cytoplasm. It is found in the perinuclear region. Its function is as follows. Essential for biological clock functions. Determines the period length of circadian and ultradian rhythms; an increase in PER dosage leads to shortened circadian rhythms and a decrease leads to lengthened circadian rhythms. Essential for the circadian rhythmicity of locomotor activity, eclosion behavior, and for the rhythmic component of the male courtship song that originates in the thoracic nervous system. The biological cycle depends on the rhythmic formation and nuclear localization of the TIM-PER complex. Light induces the degradation of TIM, which promotes elimination of PER. Nuclear activity of the heterodimer coordinatively regulates PER and TIM transcription through a negative feedback loop. Behaves as a negative element in circadian transcriptional loop. Does not appear to bind DNA, suggesting indirect transcriptional inhibition. The chain is Period circadian protein (per) from Drosophila erecta (Fruit fly).